Consider the following 151-residue polypeptide: Ubiquitin-conjugating enzyme E2 W (151 aa).

Residues 3-151 form the UBC core domain; it reads SMQKRLQKEL…TKWWYHDDTC (149 aa). The active-site Glycyl thioester intermediate is the Cys91.

Belongs to the ubiquitin-conjugating enzyme family.

The protein localises to the nucleus. The enzyme catalyses S-ubiquitinyl-[E1 ubiquitin-activating enzyme]-L-cysteine + [E2 ubiquitin-conjugating enzyme]-L-cysteine = [E1 ubiquitin-activating enzyme]-L-cysteine + S-ubiquitinyl-[E2 ubiquitin-conjugating enzyme]-L-cysteine.. It carries out the reaction S-ubiquitinyl-[E1 ubiquitin-activating enzyme]-L-cysteine + [acceptor protein]-N-terminal-amino acid = [E1 ubiquitin-activating enzyme]-L-cysteine + N-terminal-ubiquitinyl-[acceptor protein].. The protein operates within protein modification; protein ubiquitination. Accepts ubiquitin from the E1 complex and catalyzes its covalent attachment to other proteins. Catalyzes monoubiquitination. Involved in degradation of misfolded chaperone substrate and DNA repair. The chain is Ubiquitin-conjugating enzyme E2 W (ube2w) from Xenopus tropicalis (Western clawed frog).